Reading from the N-terminus, the 147-residue chain is Calcium-regulated heat-stable protein 1 (147 aa).

Residues 1–12 show a composition bias toward pro residues; it reads MSSEPPPPPQPP. Positions 1-52 are disordered; sequence MSSEPPPPPQPPTHQASVGLLDTPRSRERSPSPLRGNVVPSPLPTRRTRTFS. Residue S2 is modified to N-acetylserine. Phosphoserine is present on residues S30, S32, and S41. T45 bears the Phosphothreonine mark. A phosphoserine mark is found at S52 and S58. The region spanning 62–129 is the CSD domain; it reads VYKGVCKCFC…KLQAVEVVIT (68 aa). A phosphoserine mark is found at S146 and S147.

In terms of assembly, homodimer. Interacts with STYX. In terms of processing, dephosphorylated by calcineurin in a Ca(2+) dependent manner. Can be phosphorylated by DYRK2 (in vitro).

It localises to the cytoplasm. Its subcellular location is the P-body. The protein localises to the cytoplasmic granule. Its function is as follows. Binds mRNA and regulates the stability of target mRNA. Binds single-stranded DNA (in vitro). The sequence is that of Calcium-regulated heat-stable protein 1 (CARHSP1) from Homo sapiens (Human).